Reading from the N-terminus, the 160-residue chain is Urease accessory protein UreE (160 aa).

Belongs to the UreE family.

It is found in the cytoplasm. Involved in urease metallocenter assembly. Binds nickel. Probably functions as a nickel donor during metallocenter assembly. This Acinetobacter baumannii (strain ACICU) protein is Urease accessory protein UreE.